A 275-amino-acid chain; its full sequence is Dermonecrotic toxin LarSicTox-alphaIII1 (275 aa).

The active site involves His-5. Residues Glu-25 and Asp-27 each coordinate Mg(2+). The active-site Nucleophile is the His-41. Intrachain disulfides connect Cys-45–Cys-51 and Cys-47–Cys-190. Position 85 (Asp-85) interacts with Mg(2+). Residue Asn-252 is glycosylated (N-linked (GlcNAc...) asparagine).

The protein belongs to the arthropod phospholipase D family. Class II subfamily. Mg(2+) is required as a cofactor. Expressed by the venom gland.

It is found in the secreted. It carries out the reaction an N-(acyl)-sphingosylphosphocholine = an N-(acyl)-sphingosyl-1,3-cyclic phosphate + choline. The enzyme catalyses an N-(acyl)-sphingosylphosphoethanolamine = an N-(acyl)-sphingosyl-1,3-cyclic phosphate + ethanolamine. The catalysed reaction is a 1-acyl-sn-glycero-3-phosphocholine = a 1-acyl-sn-glycero-2,3-cyclic phosphate + choline. It catalyses the reaction a 1-acyl-sn-glycero-3-phosphoethanolamine = a 1-acyl-sn-glycero-2,3-cyclic phosphate + ethanolamine. Dermonecrotic toxins cleave the phosphodiester linkage between the phosphate and headgroup of certain phospholipids (sphingolipid and lysolipid substrates), forming an alcohol (often choline) and a cyclic phosphate. This toxin acts on sphingomyelin (SM). It may also act on ceramide phosphoethanolamine (CPE), lysophosphatidylcholine (LPC) and lysophosphatidylethanolamine (LPE), but not on lysophosphatidylserine (LPS), and lysophosphatidylglycerol (LPG). It acts by transphosphatidylation, releasing exclusively cyclic phosphate products as second products. Induces dermonecrosis, hemolysis, increased vascular permeability, edema, inflammatory response, and platelet aggregation. The polypeptide is Dermonecrotic toxin LarSicTox-alphaIII1 (Loxosceles arizonica (Arizona brown spider)).